A 194-amino-acid chain; its full sequence is FMN-dependent NADH:quinone oxidoreductase (194 aa).

FMN-binding positions include serine 10 and 90–93; that span reads MYNL.

It belongs to the azoreductase type 1 family. In terms of assembly, homodimer. FMN serves as cofactor.

It catalyses the reaction 2 a quinone + NADH + H(+) = 2 a 1,4-benzosemiquinone + NAD(+). The catalysed reaction is N,N-dimethyl-1,4-phenylenediamine + anthranilate + 2 NAD(+) = 2-(4-dimethylaminophenyl)diazenylbenzoate + 2 NADH + 2 H(+). Functionally, quinone reductase that provides resistance to thiol-specific stress caused by electrophilic quinones. In terms of biological role, also exhibits azoreductase activity. Catalyzes the reductive cleavage of the azo bond in aromatic azo compounds to the corresponding amines. This Haemophilus influenzae (strain PittEE) protein is FMN-dependent NADH:quinone oxidoreductase.